The primary structure comprises 193 residues: Orotate phosphoribosyltransferase (193 aa).

5-phospho-alpha-D-ribose 1-diphosphate is bound by residues Arg102, Lys103, Lys106, His108, and 129–137; that span reads EDVVTTGGS. Orotate contacts are provided by Thr133 and Arg161.

The protein belongs to the purine/pyrimidine phosphoribosyltransferase family. PyrE subfamily. In terms of assembly, homodimer. Mg(2+) is required as a cofactor.

The enzyme catalyses orotidine 5'-phosphate + diphosphate = orotate + 5-phospho-alpha-D-ribose 1-diphosphate. It participates in pyrimidine metabolism; UMP biosynthesis via de novo pathway; UMP from orotate: step 1/2. Functionally, catalyzes the transfer of a ribosyl phosphate group from 5-phosphoribose 1-diphosphate to orotate, leading to the formation of orotidine monophosphate (OMP). The polypeptide is Orotate phosphoribosyltransferase (Prochlorococcus marinus (strain NATL1A)).